A 502-amino-acid polypeptide reads, in one-letter code: Probable glycine dehydrogenase (decarboxylating) subunit 2 (502 aa).

K273 bears the N6-(pyridoxal phosphate)lysine mark.

Belongs to the GcvP family. C-terminal subunit subfamily. As to quaternary structure, the glycine cleavage system is composed of four proteins: P, T, L and H. In this organism, the P 'protein' is a heterodimer of two subunits. Pyridoxal 5'-phosphate serves as cofactor.

It catalyses the reaction N(6)-[(R)-lipoyl]-L-lysyl-[glycine-cleavage complex H protein] + glycine + H(+) = N(6)-[(R)-S(8)-aminomethyldihydrolipoyl]-L-lysyl-[glycine-cleavage complex H protein] + CO2. The glycine cleavage system catalyzes the degradation of glycine. The P protein binds the alpha-amino group of glycine through its pyridoxal phosphate cofactor; CO(2) is released and the remaining methylamine moiety is then transferred to the lipoamide cofactor of the H protein. This chain is Probable glycine dehydrogenase (decarboxylating) subunit 2, found in Thermococcus gammatolerans (strain DSM 15229 / JCM 11827 / EJ3).